Here is a 141-residue protein sequence, read N- to C-terminus: Ly6/PLAUR domain-containing protein 1 (141 aa).

An N-terminal signal peptide occupies residues 1 to 20 (MWVLGIAATFCGLFWLPGLA). 6 disulfides stabilise this stretch: cysteine 25–cysteine 54, cysteine 28–cysteine 37, cysteine 46–cysteine 71, cysteine 77–cysteine 100, cysteine 88–cysteine 97, and cysteine 101–cysteine 106. The 84-residue stretch at 25–108 (CYQCEEFQLN…SCCNTPLCNG (84 aa)) folds into the UPAR/Ly6 domain. N-linked (GlcNAc...) asparagine glycosylation occurs at asparagine 45. Glycine 115 carries the GPI-anchor amidated glycine lipid modification. Residues 116-141 (SSASAIRPELFTTVLFFNLALCLAHC) constitute a propeptide, removed in mature form.

As to quaternary structure, interacts with CHRNA4 and nAChRs containing alpha-4:beta-2 (CHRNA4:CHRNB2) and alpha-7 (CHRNA7) subunits.

It localises to the cell membrane. Its function is as follows. Believed to act as a modulator of nicotinic acetylcholine receptors (nAChRs) activity. In vitro increases receptor desensitization and decreases affinity for ACh of alpha-4:beta-2-containing nAChRs. May play a role in the intracellular trafficking of alpha-4:beta-2 and alpha-7-containing nAChRs and may inhibit their expression at the cell surface. May be involved in the control of anxiety. In Rattus norvegicus (Rat), this protein is Ly6/PLAUR domain-containing protein 1 (Lypd1).